Consider the following 274-residue polypeptide: Bis(5'-nucleosyl)-tetraphosphatase, symmetrical (274 aa).

This sequence belongs to the Ap4A hydrolase family.

It catalyses the reaction P(1),P(4)-bis(5'-adenosyl) tetraphosphate + H2O = 2 ADP + 2 H(+). Functionally, hydrolyzes diadenosine 5',5'''-P1,P4-tetraphosphate to yield ADP. This is Bis(5'-nucleosyl)-tetraphosphatase, symmetrical from Shewanella sp. (strain MR-7).